We begin with the raw amino-acid sequence, 146 residues long: uncharacterized protein (146 aa).

This is an uncharacterized protein from Methanothermobacter thermautotrophicus (Methanobacterium thermoformicicum).